An 812-amino-acid polypeptide reads, in one-letter code: Probable inorganic carbon transporter subunit DabA (812 aa).

The Zn(2+) site is built by cysteine 337, aspartate 339, histidine 499, and cysteine 514.

Belongs to the inorganic carbon transporter (TC 9.A.2) DabA family. As to quaternary structure, forms a complex with DabB. The cofactor is Zn(2+).

The protein resides in the cell inner membrane. Its function is as follows. Part of an energy-coupled inorganic carbon pump. This chain is Probable inorganic carbon transporter subunit DabA, found in Xanthomonas oryzae pv. oryzae (strain KACC10331 / KXO85).